The chain runs to 141 residues: Large ribosomal subunit protein uL11 (141 aa).

The protein belongs to the universal ribosomal protein uL11 family. As to quaternary structure, part of the ribosomal stalk of the 50S ribosomal subunit. Interacts with L10 and the large rRNA to form the base of the stalk. L10 forms an elongated spine to which L12 dimers bind in a sequential fashion forming a multimeric L10(L12)X complex. One or more lysine residues are methylated.

Functionally, forms part of the ribosomal stalk which helps the ribosome interact with GTP-bound translation factors. The protein is Large ribosomal subunit protein uL11 of Lactobacillus acidophilus (strain ATCC 700396 / NCK56 / N2 / NCFM).